The sequence spans 224 residues: Large ribosomal subunit protein uL3 (224 aa).

Q159 carries the N5-methylglutamine modification.

This sequence belongs to the universal ribosomal protein uL3 family. In terms of assembly, part of the 50S ribosomal subunit. Forms a cluster with proteins L14 and L19. Post-translationally, methylated by PrmB.

Its function is as follows. One of the primary rRNA binding proteins, it binds directly near the 3'-end of the 23S rRNA, where it nucleates assembly of the 50S subunit. The polypeptide is Large ribosomal subunit protein uL3 (Janthinobacterium sp. (strain Marseille) (Minibacterium massiliensis)).